Here is a 75-residue protein sequence, read N- to C-terminus: Small ribosomal subunit protein bS18 (75 aa).

It belongs to the bacterial ribosomal protein bS18 family. As to quaternary structure, part of the 30S ribosomal subunit. Forms a tight heterodimer with protein bS6.

Its function is as follows. Binds as a heterodimer with protein bS6 to the central domain of the 16S rRNA, where it helps stabilize the platform of the 30S subunit. This is Small ribosomal subunit protein bS18 from Alteromonas mediterranea (strain DSM 17117 / CIP 110805 / LMG 28347 / Deep ecotype).